We begin with the raw amino-acid sequence, 226 residues long: Leucyl/phenylalanyl-tRNA--protein transferase (226 aa).

It belongs to the L/F-transferase family.

It localises to the cytoplasm. It carries out the reaction N-terminal L-lysyl-[protein] + L-leucyl-tRNA(Leu) = N-terminal L-leucyl-L-lysyl-[protein] + tRNA(Leu) + H(+). The catalysed reaction is N-terminal L-arginyl-[protein] + L-leucyl-tRNA(Leu) = N-terminal L-leucyl-L-arginyl-[protein] + tRNA(Leu) + H(+). The enzyme catalyses L-phenylalanyl-tRNA(Phe) + an N-terminal L-alpha-aminoacyl-[protein] = an N-terminal L-phenylalanyl-L-alpha-aminoacyl-[protein] + tRNA(Phe). Functions in the N-end rule pathway of protein degradation where it conjugates Leu, Phe and, less efficiently, Met from aminoacyl-tRNAs to the N-termini of proteins containing an N-terminal arginine or lysine. This Salinibacter ruber (strain DSM 13855 / M31) protein is Leucyl/phenylalanyl-tRNA--protein transferase.